The following is a 61-amino-acid chain: Large ribosomal subunit protein bL32 (61 aa).

The protein belongs to the bacterial ribosomal protein bL32 family.

This Syntrophus aciditrophicus (strain SB) protein is Large ribosomal subunit protein bL32.